The chain runs to 162 residues: Allantoicase (162 aa).

Belongs to the allantoicase family. As to quaternary structure, homohexamer. Expressed in zygote.

It carries out the reaction allantoate + H2O = (S)-ureidoglycolate + urea. It participates in nitrogen metabolism; (S)-allantoin degradation; (S)-ureidoglycolate from allantoate (aminidohydrolase route): step 1/1. Catalyzes the degradation of allantoate to (-)-ureidoglycolate and (+)-ureidoglycolate to glyoxylate. The chain is Allantoicase from Chlamydomonas reinhardtii (Chlamydomonas smithii).